Consider the following 208-residue polypeptide: Redox-sensing transcriptional repressor Rex 1 (208 aa).

A DNA-binding region (H-T-H motif) is located at residues 15 to 54 (SYYMCLERLLDEGVEVVSSEELARRLDLKASQIRKDLSYF). Residue 89-94 (GAGNIG) participates in NAD(+) binding.

Belongs to the transcriptional regulatory Rex family. Homodimer.

The protein localises to the cytoplasm. Functionally, modulates transcription in response to changes in cellular NADH/NAD(+) redox state. In Thermotoga maritima (strain ATCC 43589 / DSM 3109 / JCM 10099 / NBRC 100826 / MSB8), this protein is Redox-sensing transcriptional repressor Rex 1.